Consider the following 566-residue polypeptide: Malate synthase, glyoxysomal (566 aa).

Catalysis depends on Arg-182, which acts as the Proton acceptor. Residue Asp-467 is the Proton donor of the active site. Residues 564–566 (SRL) carry the Microbody targeting signal motif.

The protein belongs to the malate synthase family.

It is found in the glyoxysome. It catalyses the reaction glyoxylate + acetyl-CoA + H2O = (S)-malate + CoA + H(+). It functions in the pathway carbohydrate metabolism; glyoxylate cycle; (S)-malate from isocitrate: step 2/2. The polypeptide is Malate synthase, glyoxysomal (Cucurbita maxima (Pumpkin)).